A 336-amino-acid polypeptide reads, in one-letter code: Probable tRNA pseudouridine synthase B (336 aa).

The active-site Nucleophile is D81. One can recognise a PUA domain in the interval 248–323 (LKKVVVKDSA…VAVDVERVYM (76 aa)).

This sequence belongs to the pseudouridine synthase TruB family. Type 2 subfamily.

The catalysed reaction is uridine(55) in tRNA = pseudouridine(55) in tRNA. Functionally, could be responsible for synthesis of pseudouridine from uracil-55 in the psi GC loop of transfer RNAs. The chain is Probable tRNA pseudouridine synthase B from Methanocaldococcus jannaschii (strain ATCC 43067 / DSM 2661 / JAL-1 / JCM 10045 / NBRC 100440) (Methanococcus jannaschii).